The sequence spans 307 residues: Glutaminase 1 (307 aa).

7 residues coordinate substrate: S62, N114, E159, N166, Y190, Y242, and V260.

Belongs to the glutaminase family. Homotetramer.

The catalysed reaction is L-glutamine + H2O = L-glutamate + NH4(+). The sequence is that of Glutaminase 1 from Clostridium perfringens (strain 13 / Type A).